The sequence spans 213 residues: Protein ras-1 (213 aa).

Residue 15-22 (GGGGVGKS) participates in GTP binding. Positions 37-45 (YDPTIEDSY) match the Effector region motif. Residues 62 to 66 (DTAGQ) and 121 to 124 (NKYD) contribute to the GTP site. Residue C210 is modified to Cysteine methyl ester. The S-farnesyl cysteine moiety is linked to residue C210. Positions 211–213 (IMM) are cleaved as a propeptide — removed in mature form.

It belongs to the small GTPase superfamily. Ras family.

It localises to the cell membrane. It catalyses the reaction GTP + H2O = GDP + phosphate + H(+). Functionally, ras proteins bind GDP/GTP and possess intrinsic GTPase activity. This chain is Protein ras-1 (ras-1), found in Neurospora crassa (strain ATCC 24698 / 74-OR23-1A / CBS 708.71 / DSM 1257 / FGSC 987).